The sequence spans 709 residues: Elongation factor G (709 aa).

In terms of domain architecture, tr-type G spans 8–297 (ANTRNIGIMA…AVIDYLPSPL (290 aa)). Residues 17–24 (AHVDAGKT), 81–85 (DTPGH), and 135–138 (NKMD) contribute to the GTP site.

It belongs to the TRAFAC class translation factor GTPase superfamily. Classic translation factor GTPase family. EF-G/EF-2 subfamily.

The protein resides in the cytoplasm. In terms of biological role, catalyzes the GTP-dependent ribosomal translocation step during translation elongation. During this step, the ribosome changes from the pre-translocational (PRE) to the post-translocational (POST) state as the newly formed A-site-bound peptidyl-tRNA and P-site-bound deacylated tRNA move to the P and E sites, respectively. Catalyzes the coordinated movement of the two tRNA molecules, the mRNA and conformational changes in the ribosome. This Lactococcus lactis subsp. cremoris (strain MG1363) protein is Elongation factor G.